The primary structure comprises 294 residues: Metallophosphoesterase MPPED2 (294 aa).

Mn(2+) contacts are provided by D65, H67, D86, N117, and H213. N117–H118 lines the GMP pocket. Residues K225–E226 and G252–E255 each bind GMP. H254 provides a ligand contact to Mn(2+).

It belongs to the UPF0046 family. Homodimer. It depends on Mn(2+) as a cofactor. The cofactor is Co(2+). In terms of tissue distribution, expressed predominantly in fetal brain.

Inhibited by nmolar levels of AMP and GMP. Its function is as follows. Displays low metallophosphoesterase activity (in vitro). May play a role in the development of the nervous system. The polypeptide is Metallophosphoesterase MPPED2 (MPPED2) (Homo sapiens (Human)).